A 95-amino-acid chain; its full sequence is Integration host factor subunit beta (95 aa).

Belongs to the bacterial histone-like protein family. In terms of assembly, heterodimer of an alpha and a beta chain.

Functionally, this protein is one of the two subunits of integration host factor, a specific DNA-binding protein that functions in genetic recombination as well as in transcriptional and translational control. This Colwellia psychrerythraea (strain 34H / ATCC BAA-681) (Vibrio psychroerythus) protein is Integration host factor subunit beta.